Consider the following 395-residue polypeptide: PCI domain-containing protein 2 homolog (395 aa).

Positions 208–389 constitute a PCI domain; it reads ITYKYFVGRR…NKLVVSKQNP (182 aa).

Belongs to the CSN12 family. As to quaternary structure, component of the nuclear pore complex (NPC)-associated TREX-2/AMEX complex (anchoring and mRNA export complex), composed of e(y)2, xmas and PCID2. Interaction between the TREX-2/AMEX complex and the ORC complex is required for ORC localization to mRNPs, and consequently mRNA export. Within the TREX-2/AMEX-ORC complex, interacts with Orc3 and Orc4. Interacts with sbr/NXF1. Interacts with Moe. Interacts with nudC; required to maintain stability in the cytoplasm. Post-translationally, mono- and poly-ubiquitinated.

It is found in the nucleus. The protein localises to the cytoplasm. The protein resides in the nucleus membrane. It localises to the cytoskeleton. Its function is as follows. Required for the export of nuclear mRNAs and involved in mRNA trafficking in the cytoplasm. Component of the nuclear pore complex (NPC)-associated TREX-2/AMEX complex (anchoring and mRNA export complex) which functions in docking export-competent ribonucleoprotein particles (mRNPs) to the nuclear entrance of the nuclear pore complex (nuclear basket), thereby enabling the export of mRNAs to the cytoplasm through the nuclear pores. Within the complex, specifically promotes the association of factors involved in regulating nuclear mRNA export, such as Moe, sbr/NXF1 and the ORC complex, to the mRNPs particles. In the cytoplasm, functions independently of its role in the TREX-2/AMEX complex, to promote cytoplasmic mRNA trafficking together with nudC. Associates with translationally active polysomes. The protein is PCI domain-containing protein 2 homolog of Drosophila melanogaster (Fruit fly).